We begin with the raw amino-acid sequence, 206 residues long: Threonine efflux protein (206 aa).

The helical transmembrane segment at 1 to 21 threads the bilayer; that stretch reads MLMLFFTVAMVHIVALMSPGP. Residues 22-43 are Periplasmic-facing; the sequence is DFFFVSQTAVSRSRKEAMMGVL. A helical transmembrane segment spans residues 44 to 64; that stretch reads GITCGVMVWAGVALLGLHLII. Topologically, residues 65 to 66 are cytoplasmic; the sequence is EK. The helical transmembrane segment at 67–87 threads the bilayer; that stretch reads MAWLHTIIMVGGGLYLCWMGY. Topologically, residues 88 to 149 are periplasmic; the sequence is QMLRGALKKQ…VGDNVGAAAR (62 aa). The chain crosses the membrane as a helical span at residues 150-173; that stretch reads WGIFALITLETLAWFTVVASLFAL. The Cytoplasmic portion of the chain corresponds to 174–206; sequence PKMRRGYQRLAKWIDGFAGALFAGFGIHLIISR.

It belongs to the Rht family.

Its subcellular location is the cell inner membrane. In terms of biological role, conducts the efflux of threonine. The protein is Threonine efflux protein (rhtC) of Salmonella typhi.